Consider the following 206-residue polypeptide: Small ribosomal subunit protein uS4 (206 aa).

In terms of domain architecture, S4 RNA-binding spans 98-161 (RRLDNVVYRL…RSMELIKNNL (64 aa)).

This sequence belongs to the universal ribosomal protein uS4 family. In terms of assembly, part of the 30S ribosomal subunit. Contacts protein S5. The interaction surface between S4 and S5 is involved in control of translational fidelity.

In terms of biological role, one of the primary rRNA binding proteins, it binds directly to 16S rRNA where it nucleates assembly of the body of the 30S subunit. Its function is as follows. With S5 and S12 plays an important role in translational accuracy. This is Small ribosomal subunit protein uS4 from Caldanaerobacter subterraneus subsp. tengcongensis (strain DSM 15242 / JCM 11007 / NBRC 100824 / MB4) (Thermoanaerobacter tengcongensis).